A 231-amino-acid polypeptide reads, in one-letter code: Uracil-DNA glycosylase (231 aa).

Aspartate 71 (proton acceptor) is an active-site residue.

It belongs to the uracil-DNA glycosylase (UDG) superfamily. UNG family.

The protein localises to the cytoplasm. The catalysed reaction is Hydrolyzes single-stranded DNA or mismatched double-stranded DNA and polynucleotides, releasing free uracil.. Functionally, excises uracil residues from the DNA which can arise as a result of misincorporation of dUMP residues by DNA polymerase or due to deamination of cytosine. The polypeptide is Uracil-DNA glycosylase (Pseudomonas aeruginosa (strain ATCC 15692 / DSM 22644 / CIP 104116 / JCM 14847 / LMG 12228 / 1C / PRS 101 / PAO1)).